The chain runs to 338 residues: Fructose-1,6-bisphosphatase class 1 (338 aa).

4 residues coordinate Mg(2+): Glu92, Asp114, Leu116, and Asp117. Substrate is bound by residues 117-120 (DGSS) and Asn210. Glu284 serves as a coordination point for Mg(2+).

Belongs to the FBPase class 1 family. As to quaternary structure, homotetramer. It depends on Mg(2+) as a cofactor.

The protein resides in the cytoplasm. It catalyses the reaction beta-D-fructose 1,6-bisphosphate + H2O = beta-D-fructose 6-phosphate + phosphate. Its pathway is carbohydrate biosynthesis; gluconeogenesis. This chain is Fructose-1,6-bisphosphatase class 1, found in Halorhodospira halophila (strain DSM 244 / SL1) (Ectothiorhodospira halophila (strain DSM 244 / SL1)).